Consider the following 412-residue polypeptide: Protein ALF (412 aa).

2 disordered regions span residues 1–47 and 154–234; these read MDPE…PLPP and GLSE…GISE. The span at 31–47 shows a compositional bias: pro residues; the sequence is PPQPPPPPLPPPQPLPP. A compositionally biased stretch (basic residues) spans 187-196; it reads MRQRRRKKVV. Over residues 206–221 the composition is skewed to acidic residues; the sequence is MEEDEDTEEGQEDNED. DNA-binding regions lie at residues 237–241, 306–313, and 377–380; these read REHPF, NKPKMRHY, and YVPT.

The protein belongs to the FLO/LFY family. As to expression, expressed in the floral meristem and also in the vegetative meristem.

Its subcellular location is the nucleus. Functionally, probable transcription factor required for the specification of floral meristem identity. The protein is Protein ALF (ALF) of Petunia hybrida (Petunia).